Reading from the N-terminus, the 519-residue chain is 2-isopropylmalate synthase (519 aa).

The 263-residue stretch at 5–267 folds into the Pyruvate carboxyltransferase domain; it reads VVIFDTTLRD…STNINYKEIY (263 aa). Residues D14, H202, H204, and N238 each contribute to the Mn(2+) site. A regulatory domain region spans residues 392 to 519; it reads SLKFFSVQSI…LKILKDFKKK (128 aa).

The protein belongs to the alpha-IPM synthase/homocitrate synthase family. LeuA type 1 subfamily. Homodimer. Mn(2+) is required as a cofactor.

The protein localises to the cytoplasm. It catalyses the reaction 3-methyl-2-oxobutanoate + acetyl-CoA + H2O = (2S)-2-isopropylmalate + CoA + H(+). It participates in amino-acid biosynthesis; L-leucine biosynthesis; L-leucine from 3-methyl-2-oxobutanoate: step 1/4. In terms of biological role, catalyzes the condensation of the acetyl group of acetyl-CoA with 3-methyl-2-oxobutanoate (2-ketoisovalerate) to form 3-carboxy-3-hydroxy-4-methylpentanoate (2-isopropylmalate). The sequence is that of 2-isopropylmalate synthase from Buchnera aphidicola subsp. Acyrthosiphon pisum (strain APS) (Acyrthosiphon pisum symbiotic bacterium).